The following is a 462-amino-acid chain: O-methyltransferase CTB2 (462 aa).

Aspartate 289 is an S-adenosyl-L-methionine binding site. Histidine 340 serves as the catalytic Proton acceptor.

It belongs to the class I-like SAM-binding methyltransferase superfamily. Cation-independent O-methyltransferase family. COMT subfamily.

The protein operates within mycotoxin biosynthesis. Functionally, O-methyltransferase; part of the gene cluster that mediates the biosynthesis of cercosporin, a light-activated, non-host-selective toxin. The perylenequinone chromophore of cercosporin absorbs light energy to attain an electronically-activated triplet state and produces active oxygen species such as the hydroxyl radical, superoxide, hydrogen peroxide or singlet oxygen upon reaction with oxygen molecules. These reactive oxygen species cause damage to various cellular components including lipids, proteins and nucleic acids. The first step of cercosporin biosynthesis is performed by the polyketide synthase CTB1 which catalyzes the formation of nor-toralactone. The starter unit acyltransferase (SAT) domain of CTB1 initiates polyketide extension by the selective utilization of acetyl-CoA, which is elongated to the heptaketide in the beta-ketoacyl synthase (KS) domain by successive condensations with six malonyl units introduced by the malonyl acyltransferase (MAT) domain. The product template (PT) domain catalyzes C4-C9 and C2-C11 aldol cyclizations and dehydrations to a trihydroxynaphthalene, which is thought to be delivered to the thioesterase (TE) domain for product release. The bifunctional enzyme CTB3 then methylates nor-toralactone to toralactone before conducting an unusual oxidative aromatic ring opening. The O-methyltransferase CTB2 further methylates the nascent OH-6 of the CBT3 product, blocking further oxidation at this site before the reductase CTB6 reduces the 2-oxopropyl ketone at position C7, giving naphthalene. The FAD-dependent monooxygenase CTB5 in concert with the multicopper oxidase CTB12 are responsible for homodimerization of naphthalene with CTB7 installing the dioxepine moiety, finally producing cercosporin. The fasciclin domain-containing protein CTB11 might act with CTB5 and CTB12 whereas the roles of CTB9 and CTB10 have still to be elucidated. This chain is O-methyltransferase CTB2, found in Cercospora beticola (Sugarbeet leaf spot fungus).